The chain runs to 103 residues: Truncated secreted TNF-receptor-like protein A53 (103 aa).

The stretch at 36 to 73 (SCDKGEYLDKRHNQCCNRCPPGEFAKVRCNGNDNTKCE) is one TNFR-Cys 1 repeat. 3 cysteine pairs are disulfide-bonded: cysteine 37–cysteine 50, cysteine 51–cysteine 64, and cysteine 54–cysteine 72. The stretch at 74–103 (RCPPHTYTTIPIILMDVINVENAQQDHLIR) is one TNFR-Cys 2; truncated repeat.

Belongs to the poxviridae A53R protein family.

The polypeptide is Truncated secreted TNF-receptor-like protein A53 (Vaccinia virus (strain Copenhagen) (VACV)).